The chain runs to 474 residues: MNKTVETFDPKQTTTLETPAKTLAAEAKASDGTIQGNRIGFVSLGCPKNLVDSERILTQLRIDGYEVTNSYDNADLVIVNTCGFIDAAVEESLDAVREALEENGKVIVTGCLGAKENQIREVHPDVLEITGPHSYEAVLNHVHKYVPKPEHNPFTSLIPQTGVKLTPKHYAYLKISEGCDNRCTFCIIPALRGDLDSRGVGSVLDEAKRLVESGVQEILVVSQDTSAYGKDKDGRTDFWNGMPVKQDITSLARQLGKMGAWVRLHYVYPYPWVDDLIPLMAEGLILPYLDLPLQHASPRVLKMMKRPGRVDRQLDAIKKWREICPDLVIRSTFIVGFPGETEEDFEMLLDFLREARLDRVGCFKYSEVDGAVANTLAELISEEVKEDRYERFMEVQAEISAERLARLVGRELDILIDDVDEEGAIGRSYADAPEIDGMVFINGETELTPGDMVRARIVASDEHDLWAELVALED.

An MTTase N-terminal domain is found at 37–147; it reads NRIGFVSLGC…VLNHVHKYVP (111 aa). [4Fe-4S] cluster contacts are provided by C46, C82, C111, C179, C183, and C186. The region spanning 165–402 is the Radical SAM core domain; sequence LTPKHYAYLK…MEVQAEISAE (238 aa). The TRAM domain maps to 405 to 471; that stretch reads ARLVGRELDI…EHDLWAELVA (67 aa).

It belongs to the methylthiotransferase family. RimO subfamily. [4Fe-4S] cluster serves as cofactor.

The protein localises to the cytoplasm. It carries out the reaction L-aspartate(89)-[ribosomal protein uS12]-hydrogen + (sulfur carrier)-SH + AH2 + 2 S-adenosyl-L-methionine = 3-methylsulfanyl-L-aspartate(89)-[ribosomal protein uS12]-hydrogen + (sulfur carrier)-H + 5'-deoxyadenosine + L-methionine + A + S-adenosyl-L-homocysteine + 2 H(+). Catalyzes the methylthiolation of an aspartic acid residue of ribosomal protein uS12. The chain is Ribosomal protein uS12 methylthiotransferase RimO from Shewanella amazonensis (strain ATCC BAA-1098 / SB2B).